We begin with the raw amino-acid sequence, 455 residues long: Chromosomal replication initiator protein DnaA 2 (455 aa).

A domain I, interacts with DnaA modulators region spans residues 1-95 (MLTCNDCSTW…KRSSPQIAAS (95 aa)). The segment at 96-112 (VTKPAVEVSEENKDFQL) is domain II. Residues 113-328 (KLNGAYRFDN…GAINKLTAYC (216 aa)) are domain III, AAA+ region. G157, G159, K160, and T161 together coordinate ATP. Residues 329–455 (LLFNKPLTET…IAIDSPQHFV (127 aa)) form a domain IV, binds dsDNA region.

It belongs to the DnaA family. Oligomerizes as a right-handed, spiral filament on DNA at oriC.

It is found in the cytoplasm. Its function is as follows. Plays an essential role in the initiation and regulation of chromosomal replication. ATP-DnaA binds to the origin of replication (oriC) to initiate formation of the DNA replication initiation complex once per cell cycle. Binds the DnaA box (a 9 base pair repeat at the origin) and separates the double-stranded (ds)DNA. Forms a right-handed helical filament on oriC DNA; dsDNA binds to the exterior of the filament while single-stranded (ss)DNA is stabiized in the filament's interior. The ATP-DnaA-oriC complex binds and stabilizes one strand of the AT-rich DNA unwinding element (DUE), permitting loading of DNA polymerase. After initiation quickly degrades to an ADP-DnaA complex that is not apt for DNA replication. Binds acidic phospholipids. The sequence is that of Chromosomal replication initiator protein DnaA 2 from Chlamydia muridarum (strain MoPn / Nigg).